Here is a 1278-residue protein sequence, read N- to C-terminus: NPC intracellular cholesterol transporter 1 (1278 aa).

The signal sequence occupies residues 1–22 (MTARGLALGLLLLLLCPAQVFS). The Lumenal segment spans residues 23–261 (QSCVWYGECG…QPPPPPAPWT (239 aa)). Cystine bridges form between Cys-25–Cys-74, Cys-31–Cys-42, Cys-63–Cys-109, Cys-75–Cys-113, Cys-97–Cys-238, Cys-100–Cys-160, Cys-177–Cys-184, Cys-227–Cys-243, and Cys-240–Cys-247. Position 41 (Asn-41) interacts with cholesterol. Asn-70 is a glycosylation site (N-linked (GlcNAc...) asparagine). Gln-79 is a binding site for cholesterol. 2 N-linked (GlcNAc...) asparagine glycosylation sites follow: Asn-122 and Asn-135. N-linked (GlcNAc...) asparagine; atypical glycosylation occurs at Asn-158. Residues 175-205 (LLCGKDADACNATNWIEYMFNKDNGQAPFTI) are important for cholesterol binding and cholesterol transfer from NPC1 to liposomes. N-linked (GlcNAc...) asparagine glycosylation is found at Asn-185 and Asn-222. Residues 262 to 282 (ILGLDAMYVIMWITYMAFLLV) form a helical membrane-spanning segment. The Cytoplasmic segment spans residues 283 to 350 (FFGAFFAVWC…RWGSFCVRNP (68 aa)). A helical membrane pass occupies residues 351-371 (GCVIFFSLVFITACSSGLVFV). Topologically, residues 372–620 (RVTTNPVDLW…DELNRESDSD (249 aa)) are lumenal. N-linked (GlcNAc...) asparagine glycans are attached at residues Asn-452, Asn-459, Asn-478, Asn-524, Asn-557, Asn-572, and Asn-598. Disulfide bonds link Cys-468/Cys-479 and Cys-516/Cys-533. The 166-residue stretch at 620-785 (DVFTVVISYA…ITCFVSLLGL (166 aa)) folds into the SSD domain. A helical membrane pass occupies residues 621 to 641 (VFTVVISYAIMFLYISLALGH). The Cytoplasmic portion of the chain corresponds to 642–653 (MKSCRRLLVDSK). A helical transmembrane segment spans residues 654–675 (VSLGIAGILIVLSSVACSLGVF). Topologically, residues 676-685 (SYIGLPLTLI) are lumenal. The helical transmembrane segment at 686-706 (VIEVIPFLVLAVGVDNIFILV) threads the bilayer. The Cytoplasmic portion of the chain corresponds to 707-730 (QAYQRDERLQGETLDQQLGRVLGE). Residues 731-751 (VAPSMFLSSFSETVAFFLGAL) traverse the membrane as a helical segment. Residues 752–759 (SVMPAVHT) are Lumenal-facing. A helical transmembrane segment spans residues 760 to 783 (FSLFAGLAVFIDFLLQITCFVSLL). Residues 784-832 (GLDIKRQEKNRLDIFCCVRGAEDGTSVQASESCLFRFFKNSYSPLLLKD) lie on the Cytoplasmic side of the membrane. A helical membrane pass occupies residues 833–853 (WMRPIVIAIFVGVLSFSIAVL). Topologically, residues 854-1097 (NKVDIGLDQS…YEQYLTIIDD (244 aa)) are lumenal. Cys-909 and Cys-914 are oxidised to a cystine. N-linked (GlcNAc...) asparagine glycans are attached at residues Asn-916, Asn-931, Asn-961, Asn-968, Asn-1064, and Asn-1072. 3 disulfides stabilise this stretch: Cys-956/Cys-1011, Cys-957/Cys-979, and Cys-967/Cys-976. A helical transmembrane segment spans residues 1098-1118 (TIFNLGVSLGAIFLVTMVLLG). The Cytoplasmic portion of the chain corresponds to 1119 to 1124 (CELWSA). The helical transmembrane segment at 1125-1145 (VIMCATIAMVLVNMFGVMWLW) threads the bilayer. The Lumenal segment spans residues 1146 to 1150 (GISLN). Residues 1151 to 1171 (AVSLVNLVMSCGISVEFCSHI) traverse the membrane as a helical segment. The Cytoplasmic segment spans residues 1172–1194 (TRAFTVSMKGSRVERAEEALAHM). A helical membrane pass occupies residues 1195–1215 (GSSVFSGITLTKFGGIVVLAF). Topologically, residues 1216-1223 (AKSQIFQI) are lumenal. A helical transmembrane segment spans residues 1224–1244 (FYFRMYLAMVLLGATHGLIFL). At 1245-1278 (PVLLSYIGPSVNKAKSCATEERYKGTERERLLNF) the chain is on the cytoplasmic side. The tract at residues 1275 to 1278 (LLNF) is required for location in lysosomes. Positions 1275–1278 (LLNF) match the Di-leucine motif motif.

This sequence belongs to the patched family. Interacts (via the second lumenal domain) with NPC2. Interacts with TMEM97; the interaction may decrease NPC1 availability to the cell. Interacts with TIM1. Interacts with SLC38A9; this interaction inhibits cholesterol-mediated mTORC1 activation via its sterol transport activity. In terms of assembly, (Microbial infection) Interacts with ebolavirus glycoprotein. N-glycosylated.

The protein localises to the late endosome membrane. Its subcellular location is the lysosome membrane. It catalyses the reaction cholesterol(in) = cholesterol(out). Its function is as follows. Intracellular cholesterol transporter which acts in concert with NPC2 and plays an important role in the egress of cholesterol from the endosomal/lysosomal compartment. Unesterified cholesterol that has been released from LDLs in the lumen of the late endosomes/lysosomes is transferred by NPC2 to the cholesterol-binding pocket in the N-terminal domain of NPC1. Cholesterol binds to NPC1 with the hydroxyl group buried in the binding pocket. Binds oxysterol with higher affinity than cholesterol. May play a role in vesicular trafficking in glia, a process that may be crucial for maintaining the structural and functional integrity of nerve terminals. Inhibits cholesterol-mediated mTORC1 activation throught its interaction with SLC38A9. Functionally, (Microbial infection) Acts as an endosomal entry receptor for ebolavirus. The polypeptide is NPC intracellular cholesterol transporter 1 (Homo sapiens (Human)).